The primary structure comprises 278 residues: Nucleotide-binding protein LHK_02029 (278 aa).

8-15 (GLAGSGKS) contributes to the ATP binding site. Residue 57–60 (DTRD) participates in GTP binding.

The protein belongs to the RapZ-like family.

Functionally, displays ATPase and GTPase activities. This Laribacter hongkongensis (strain HLHK9) protein is Nucleotide-binding protein LHK_02029.